A 355-amino-acid chain; its full sequence is Zinc finger protein CONSTANS-LIKE 1 (355 aa).

The Zn(2+) site is built by C12, C15, C35, H40, C55, C58, C78, and H83. Residues 12–54 (CDTCRSAACTVYCRADSAYLCSSCDAQVHAANRLASRHERVRV) form a B box-type 1; atypical zinc finger. A B box-type 2; atypical zinc finger spans residues 55–97 (CQSCERAPAAFFCKADAASLCTTCDSEIHSANPLARRHQRVPI). Residues 252 to 264 (ESTTSDATVSNPR) are compositionally biased toward polar residues. Residues 252–281 (ESTTSDATVSNPRSPKAVTDQPPYPPAQML) are disordered. Residues 286 to 328 (REARVLRYREKKKMRKFEKTIRYASRKAYAEKRPRIKGRFAKK) form the CCT domain.

This sequence belongs to the CONSTANS family. In terms of tissue distribution, highly expressed in leaves and at lower levels in stems, flowers and siliques. Not detected in roots.

The protein localises to the nucleus. In terms of biological role, putative transcription factor that may be involved in the light input to the circadian clock but does not affect flowering time. This Arabidopsis thaliana (Mouse-ear cress) protein is Zinc finger protein CONSTANS-LIKE 1 (COL1).